The sequence spans 285 residues: MEQRNRLGALGYLPPLLLHALLLFVADAAFTEVPKDVTVREGDDIEMPCAFRASGATSYSLEIQWWYLKEPPRELLHELALSVPGARSKVTNKDATKISTVRVQGNDISHRLRLSAVRLQDEGVYECRVSDYSDDDTQEHKAQAMLRVLSRFAPPNMQAAEAVSHIQSSGPRRHGPASAANANNAGAASRTTSEPGRGDKSPPPGSPPAAIDPAVPEAAAASAAHTPTTTVAAAAAASSASPPSGQAVLLRQRHGSGTGRSYTTDPLLSLLLLALHKFLRLLLGH.

Positions 1 to 28 (MEQRNRLGALGYLPPLLLHALLLFVADA) are cleaved as a signal peptide. An Ig-like V-type domain is found at 29–143 (AFTEVPKDVT…DDDTQEHKAQ (115 aa)). Residues 29 to 263 (AFTEVPKDVT…HGSGTGRSYT (235 aa)) lie on the Extracellular side of the membrane. An intrachain disulfide couples cysteine 49 to cysteine 127. The segment at 161-226 (EAVSHIQSSG…EAAAASAAHT (66 aa)) is disordered. 2 stretches are compositionally biased toward low complexity: residues 177–189 (ASAA…GAAS) and 208–226 (PAAI…AAHT). A helical membrane pass occupies residues 264–284 (TDPLLSLLLLALHKFLRLLLG). Histidine 285 is a topological domain (cytoplasmic).

Its subcellular location is the membrane. This chain is V-set and transmembrane domain-containing protein 2B (VSTM2B), found in Homo sapiens (Human).